Consider the following 132-residue polypeptide: Small ribosomal subunit protein uS8 (132 aa).

It belongs to the universal ribosomal protein uS8 family. As to quaternary structure, part of the 30S ribosomal subunit. Contacts proteins S5 and S12.

Its function is as follows. One of the primary rRNA binding proteins, it binds directly to 16S rRNA central domain where it helps coordinate assembly of the platform of the 30S subunit. This Streptococcus agalactiae serotype Ia (strain ATCC 27591 / A909 / CDC SS700) protein is Small ribosomal subunit protein uS8.